The chain runs to 475 residues: Glycogen synthase (475 aa).

Residue K15 coordinates ADP-alpha-D-glucose.

This sequence belongs to the glycosyltransferase 1 family. Bacterial/plant glycogen synthase subfamily.

It catalyses the reaction [(1-&gt;4)-alpha-D-glucosyl](n) + ADP-alpha-D-glucose = [(1-&gt;4)-alpha-D-glucosyl](n+1) + ADP + H(+). It functions in the pathway glycan biosynthesis; glycogen biosynthesis. Functionally, synthesizes alpha-1,4-glucan chains using ADP-glucose. This chain is Glycogen synthase, found in Chlamydia caviae (strain ATCC VR-813 / DSM 19441 / 03DC25 / GPIC) (Chlamydophila caviae).